Consider the following 291-residue polypeptide: MTFQDLILSLQGYWAKQGCVIQQPYDTEKGAGTFNPATFLRVLGPEPWNVAYVEPSRRPTDGRYGENPNRLQHYYQFQVIMKPSPLNILDLYLDSLRAFGIDPQKHDIRFVEDDWESPTLGAWGLGWEVWLDGMEITQFTYFQQAGGIDLKPVSSEITYGCERIAMYLQGVDNVYDLEWIKGVSYGDIHHRSEVEFSTYNFEEADVAMLLQLFTMYEKECVRLVERGLVLPAYDFVMKCSHTFNLLDARGAISVTERASYIGRVRNVARLCAEGYLKLRESLGFPLLKGGR.

Belongs to the class-II aminoacyl-tRNA synthetase family. In terms of assembly, tetramer of two alpha and two beta subunits.

Its subcellular location is the cytoplasm. The catalysed reaction is tRNA(Gly) + glycine + ATP = glycyl-tRNA(Gly) + AMP + diphosphate. The protein is Glycine--tRNA ligase alpha subunit of Geobacter metallireducens (strain ATCC 53774 / DSM 7210 / GS-15).